We begin with the raw amino-acid sequence, 277 residues long: Tryptophan synthase alpha chain (277 aa).

Residues glutamate 51 and glutamate 62 each act as proton acceptor in the active site.

Belongs to the TrpA family. Tetramer of two alpha and two beta chains.

The enzyme catalyses (1S,2R)-1-C-(indol-3-yl)glycerol 3-phosphate + L-serine = D-glyceraldehyde 3-phosphate + L-tryptophan + H2O. The protein operates within amino-acid biosynthesis; L-tryptophan biosynthesis; L-tryptophan from chorismate: step 5/5. In terms of biological role, the alpha subunit is responsible for the aldol cleavage of indoleglycerol phosphate to indole and glyceraldehyde 3-phosphate. The sequence is that of Tryptophan synthase alpha chain from Phenylobacterium zucineum (strain HLK1).